Reading from the N-terminus, the 269-residue chain is MANEPQEHEEGKPFFPPLGDSGEEGPPNIPQDPTPGTPPGPINSKNEDYPPPLENPGPNKSEGPPDGSGNSSPPVTMLVKNNGDRTKQDVSESGGNNSAPNSVESKHTSSSSSAGNGNETKCPDEQNTQECITTIYIPWEDAKPKLMGLVKLDSSDSEEERSPFNKYPKNYKKLRVDMGENWPPGIPPPQLPPRPANLGQKQSATSKNGPQIILREATEVESQQATDGQLNHRVEKVEKKLTCVICLLIGILVLLILLFMLGFLFLLMK.

Positions 1–12 (MANEPQEHEEGK) are enriched in basic and acidic residues. Residues 1-127 (MANEPQEHEE…NETKCPDEQN (127 aa)) are disordered. At 1 to 246 (MANEPQEHEE…VEKKLTCVIC (246 aa)) the chain is on the cytoplasmic side. The segment covering 27 to 41 (PNIPQDPTPGTPPGP) has biased composition (pro residues). Residues 61-74 (SEGPPDGSGNSSPP) show a composition bias toward low complexity. Composition is skewed to polar residues over residues 91-101 (SESGGNNSAPN) and 114-127 (AGNG…DEQN). Residue tyrosine 136 is modified to Phosphotyrosine; by host LCK. A CSKH/LBD2 region spans residues 158 to 167 (EEERSPFNKY). The tract at residues 186–195 (IPPPQLPPRP) is SH3B/LBD1. A helical membrane pass occupies residues 247–267 (LLIGILVLLILLFMLGFLFLL). Residues 268–269 (MK) are Extracellular-facing.

Homodimer. Binds SH3 domain of host LYN, HCK, LCK, SRC, FYN or YES. When tyrosine-phosphorylated, binds to the SH2 domain of host LCK, SRC, or FYN. Post-translationally, phosphorylated by host LCK, SRC and less efficiently by FYN.

The protein resides in the host cell membrane. Its function is as follows. Transforms host T-cells, inducing T-cell lymphomia in the host. Activates at least SRC and LCK tyrosines kinases, thereby activating signaling pathway transforming host T-cells. Human T-cells transformed ex vivo display a IL2 indenpendent growth phenotype. The sequence is that of Protein tio from Ateles (AtHV-3).